We begin with the raw amino-acid sequence, 628 residues long: Propionate--CoA ligase (628 aa).

This sequence belongs to the ATP-dependent AMP-binding enzyme family.

The enzyme catalyses propanoate + ATP + CoA = propanoyl-CoA + AMP + diphosphate. It functions in the pathway organic acid metabolism; propanoate degradation. Catalyzes the synthesis of propionyl-CoA from propionate and CoA. Also converts acetate to acetyl-CoA but with a lower specific activity. This chain is Propionate--CoA ligase (prpE), found in Salmonella typhimurium (strain LT2 / SGSC1412 / ATCC 700720).